A 427-amino-acid chain; its full sequence is Isoprenylcysteine alpha-carbonyl methylesterase ICME (427 aa).

A disordered region spans residues 26 to 59 (EVLPDEDSDRTTLLNGEPLRRRVSGKSPVDEGPR). The next 2 membrane-spanning stretches (helical) occupy residues 102–122 (LLALTCYAMLLMPGFLQVAYS) and 157–177 (VVVFVTGGAWIIGYKAWGSLL). Residues 163–165 (GGA) and 234–236 (QSA) each bind substrate. Active-site residues include Ser-235, Asp-336, and His-368.

This sequence belongs to the AB hydrolase superfamily. Isoprenylcysteine methylesterase family. Expressed in roots, rosette and cauline leaves, stems, flowers and siliques.

It localises to the endoplasmic reticulum membrane. The protein resides in the golgi apparatus membrane. It carries out the reaction [protein]-C-terminal S-[(2E,6E)-farnesyl]-L-cysteine methyl ester + H2O = [protein]-C-terminal S-[(2E,6E)-farnesyl]-L-cysteine + methanol + H(+). In terms of biological role, catalyzes the demethylation of isoprenylcysteine methylesters. In vitro, is specific for N-acetyl-S-farnesyl-L-cysteine methyl ester (AFCme) and has low activity toward N-acetyl-S-geranyl-L-cysteine methyl ester (AGCme). Acts as a positive regulator of ABA signaling. May be involved in the demethylation and inactivation of isoprenylated negative regulators of abscisic acid (ABA) signaling. Carboxyl methylation is a reversible and potentially regulated step in the post-translational modification of prenylated proteins. The polypeptide is Isoprenylcysteine alpha-carbonyl methylesterase ICME (Arabidopsis thaliana (Mouse-ear cress)).